We begin with the raw amino-acid sequence, 375 residues long: 23S rRNA (uracil(747)-C(5))-methyltransferase RlmC (375 aa).

[4Fe-4S] cluster is bound by residues Cys3, Cys11, Cys14, and Cys87. S-adenosyl-L-methionine is bound by residues Gln212, Phe241, Glu262, and Asn307. The active-site Nucleophile is the Cys334.

Belongs to the class I-like SAM-binding methyltransferase superfamily. RNA M5U methyltransferase family. RlmC subfamily.

It catalyses the reaction uridine(747) in 23S rRNA + S-adenosyl-L-methionine = 5-methyluridine(747) in 23S rRNA + S-adenosyl-L-homocysteine + H(+). Its function is as follows. Catalyzes the formation of 5-methyl-uridine at position 747 (m5U747) in 23S rRNA. This chain is 23S rRNA (uracil(747)-C(5))-methyltransferase RlmC, found in Shigella boydii serotype 18 (strain CDC 3083-94 / BS512).